A 1262-amino-acid chain; its full sequence is Structural maintenance of chromosomes protein 1 (1262 aa).

Residues 171–497 (SRSHEFQAEY…VAVVRQLSEA (327 aa)) adopt a coiled-coil conformation. An SMC hinge domain is found at 524-642 (SVYGRLVDLC…ESQEDAKQLA (119 aa)). The stretch at 680-937 (KKWDEKVVKQ…RLESLLTKKQ (258 aa)) forms a coiled coil. The tract at residues 965 to 994 (EYEEDDGDDTASQSSQSATDGPSVSEEQIQ) is disordered. The span at 974–991 (TASQSSQSATDGPSVSEE) shows a compositional bias: polar residues. The stretch at 1017–1086 (DGVRQMSNRL…QQFEKVKTDR (70 aa)) forms a coiled coil. A DA-box motif is present at residues 1148–1183 (LSGGEKTIAALALLFAVHGRNPAPFFVLDEIDAALD).

Belongs to the SMC family. SMC1 subfamily. In terms of assembly, component of the cohesin complex, composed of the smc-1 and smc-3 heterodimer attached via their SMC hinge domain, scc-1 which links them, and scc-3. Interacts with smc-3, scc-1, scc-3 and tim-1.

It localises to the nucleus. The protein resides in the chromosome. In terms of biological role, involved in chromosome cohesion during cell cycle and in DNA repair. Required for chromosome segregation during mitosis. Central component of cohesin complex. The cohesin complex is required for the cohesion of sister chromatids after DNA replication. The cohesin complex apparently forms a large proteinaceous ring within which sister chromatids can be trapped. At anaphase, the complex is cleaved and dissociates from chromatin, allowing sister chromatids to segregate. The protein is Structural maintenance of chromosomes protein 1 of Caenorhabditis elegans.